The following is a 162-amino-acid chain: Phosphopantetheine adenylyltransferase (162 aa).

A substrate-binding site is contributed by Ser9. ATP contacts are provided by residues 9–10 and His17; that span reads SF. Residues Lys41, Ile77, and Lys91 each contribute to the substrate site. ATP is bound by residues 92-94, Glu102, and 126-132; these read GLR and YAFLSSS.

It belongs to the bacterial CoaD family. In terms of assembly, homohexamer. It depends on Mg(2+) as a cofactor.

It localises to the cytoplasm. It carries out the reaction (R)-4'-phosphopantetheine + ATP + H(+) = 3'-dephospho-CoA + diphosphate. Its pathway is cofactor biosynthesis; coenzyme A biosynthesis; CoA from (R)-pantothenate: step 4/5. Functionally, reversibly transfers an adenylyl group from ATP to 4'-phosphopantetheine, yielding dephospho-CoA (dPCoA) and pyrophosphate. This chain is Phosphopantetheine adenylyltransferase, found in Frankia casuarinae (strain DSM 45818 / CECT 9043 / HFP020203 / CcI3).